A 767-amino-acid polypeptide reads, in one-letter code: Cap-specific mRNA (nucleoside-2'-O-)-methyltransferase 2 (767 aa).

The Adrift-type SAM-dependent 2'-O-MTase domain maps to 109-322 (ELCTQAWCKF…VYVVCLRYKG (214 aa)). The active site involves K117. G148, W167, and D235 together coordinate S-adenosyl-L-methionine. D235 is a catalytic residue. K275 (proton acceptor) is an active-site residue.

It is found in the nucleus. The protein localises to the cytoplasm. It catalyses the reaction a 5'-end (N(7)-methyl 5'-triphosphoguanosine)-(2'-O-methyl-ribonucleoside)-(ribonucleotide) in mRNA + S-adenosyl-L-methionine = a 5'-end (N(7)-methyl 5'-triphosphoguanosine)-(2'-O-methyl-ribonucleoside)-(2'-O-methyl-ribonucleotide) in mRNA + S-adenosyl-L-homocysteine + H(+). In terms of biological role, S-adenosyl-L-methionine-dependent methyltransferase that mediates mRNA cap2 2'-O-ribose methylation to the 5'-cap structure of mRNAs. Methylates the ribose of the second nucleotide of a m(7)GpppG-capped mRNA and small nuclear RNA (snRNA) (cap0) to produce m(7)GpppRmpNm (cap2). Recognizes a guanosine cap on RNA independently of its N(7) methylation status. Display cap2 methylation on both cap0 and cap1. Displays a preference for cap1 RNAs. This Mus musculus (Mouse) protein is Cap-specific mRNA (nucleoside-2'-O-)-methyltransferase 2 (Cmtr2).